A 351-amino-acid chain; its full sequence is Outer membrane porin PhoE (351 aa).

The N-terminal stretch at 1–21 (MKKSTLALVVMGIVASASVQA) is a signal peptide.

This sequence belongs to the Gram-negative porin family. Homotrimer. Forms mixed heterotrimers with OmpC and with OmpF; other mixed heterotrimers are also probable.

It localises to the cell outer membrane. In terms of biological role, uptake of inorganic phosphate, phosphorylated compounds, and some other negatively charged solutes. The sequence is that of Outer membrane porin PhoE (phoE) from Escherichia coli (strain K12).